The sequence spans 137 residues: Proofreading thioesterase EntH (137 aa).

The Nucleophile or proton acceptor role is filled by Glu63.

The protein belongs to the thioesterase PaaI family. In terms of assembly, homotetramer. Dimer of dimers. Interacts specifically with the aryl carrier protein (ArCP) domain of EntB.

It localises to the cytoplasm. It participates in siderophore biosynthesis; enterobactin biosynthesis. Its function is as follows. Required for optimal enterobactin synthesis. Acts as a proofreading enzyme that prevents EntB misacylation by hydrolyzing the thioester bound existing between EntB and wrongly charged molecules. This chain is Proofreading thioesterase EntH, found in Escherichia coli O157:H7 (strain EC4115 / EHEC).